Reading from the N-terminus, the 247-residue chain is Putative ankyrin repeat protein RBE_1110 (247 aa).

ANK repeat units lie at residues glutamine 105 to tyrosine 135 and glutamate 139 to threonine 171.

The protein is Putative ankyrin repeat protein RBE_1110 of Rickettsia bellii (strain RML369-C).